The primary structure comprises 357 residues: MRPARAFIDLQALRHNYQLARESSGGKALAVVKADAYGHGAVRVAQALEAQADGFAVACIEEALELRAAGIRAPVLLLEGFFEADELALIVEHDLWTVVHATWQLEAIEQARLGKPITVWLKLDTGMHRVGLHPHEYQAGYQRLLATGKVARIVLMSHFSRADELNSGCSDEQLAVFETFRKGLAAETSLKNSPAVLGWPQIPSDWSRPGIMLYGATPFDQVHPLADRLQPVMTLESKIISVRELPVGEPVGYGATFVCDRPLRIGVVAMGYADGYPRHAPTGTPVQIDGQPSRLLGRVSMDMLCVDLTEVPQAGLGSRVELWGKQVLASEVAQRAETIPYEIFCNLRRVPRIYSED.

K33 acts as the Proton acceptor; specific for D-alanine in catalysis. K33 is modified (N6-(pyridoxal phosphate)lysine). R129 lines the substrate pocket. The active-site Proton acceptor; specific for L-alanine is the Y253. M301 is a substrate binding site.

The protein belongs to the alanine racemase family. Requires pyridoxal 5'-phosphate as cofactor.

It catalyses the reaction L-alanine = D-alanine. It functions in the pathway amino-acid biosynthesis; D-alanine biosynthesis; D-alanine from L-alanine: step 1/1. In terms of biological role, catalyzes the interconversion of L-alanine and D-alanine. May also act on other amino acids. The protein is Alanine racemase (alr) of Pseudomonas syringae pv. syringae (strain B728a).